A 337-amino-acid polypeptide reads, in one-letter code: Protoheme IX farnesyltransferase (337 aa).

A compositionally biased stretch (polar residues) spans 1-17 (MPFSISKDTVSNQTTHV). The disordered stretch occupies residues 1–41 (MPFSISKDTVSNQTTHVATAPASQRPDPVETKVEQEQGRPR). Positions 27–41 (DPVETKVEQEQGRPR) are enriched in basic and acidic residues. 8 consecutive transmembrane segments (helical) span residues 59 to 79 (IIEL…HGVP), 81 to 101 (LGLV…ANVF), 130 to 150 (SALI…GFGA), 153 to 173 (LSAA…SMLL), 196 to 216 (WTAV…IVFW), 250 to 270 (VAIQ…VLWP), 271 to 291 (VAHM…VFIV), and 311 to 331 (PMGL…AIAV).

Belongs to the UbiA prenyltransferase family. Protoheme IX farnesyltransferase subfamily.

It is found in the cell membrane. It carries out the reaction heme b + (2E,6E)-farnesyl diphosphate + H2O = Fe(II)-heme o + diphosphate. The protein operates within porphyrin-containing compound metabolism; heme O biosynthesis; heme O from protoheme: step 1/1. Converts heme B (protoheme IX) to heme O by substitution of the vinyl group on carbon 2 of heme B porphyrin ring with a hydroxyethyl farnesyl side group. In Cutibacterium acnes (strain DSM 16379 / KPA171202) (Propionibacterium acnes), this protein is Protoheme IX farnesyltransferase.